The primary structure comprises 329 residues: Acetyl-coenzyme A carboxylase carboxyl transferase subunit alpha (329 aa).

One can recognise a CoA carboxyltransferase C-terminal domain in the interval 40 to 294 (QLETLAARRR…KNALEKHLSE (255 aa)).

It belongs to the AccA family. As to quaternary structure, acetyl-CoA carboxylase is a heterohexamer composed of biotin carboxyl carrier protein (AccB), biotin carboxylase (AccC) and two subunits each of ACCase subunit alpha (AccA) and ACCase subunit beta (AccD).

The protein resides in the cytoplasm. The catalysed reaction is N(6)-carboxybiotinyl-L-lysyl-[protein] + acetyl-CoA = N(6)-biotinyl-L-lysyl-[protein] + malonyl-CoA. It functions in the pathway lipid metabolism; malonyl-CoA biosynthesis; malonyl-CoA from acetyl-CoA: step 1/1. In terms of biological role, component of the acetyl coenzyme A carboxylase (ACC) complex. First, biotin carboxylase catalyzes the carboxylation of biotin on its carrier protein (BCCP) and then the CO(2) group is transferred by the carboxyltransferase to acetyl-CoA to form malonyl-CoA. This chain is Acetyl-coenzyme A carboxylase carboxyl transferase subunit alpha, found in Prochlorococcus marinus (strain NATL1A).